Here is a 91-residue protein sequence, read N- to C-terminus: Acylphosphatase (91 aa).

The Acylphosphatase-like domain occupies 3–91; that stretch reads KLRMNVQGRV…EETEQFKVIQ (89 aa). Active-site residues include Arg-18 and Asn-36.

It belongs to the acylphosphatase family.

The enzyme catalyses an acyl phosphate + H2O = a carboxylate + phosphate + H(+). In Enterococcus faecalis (strain ATCC 700802 / V583), this protein is Acylphosphatase (acyP).